A 185-amino-acid chain; its full sequence is 4-nitrophenol 4-monooxygenase/4-nitrocatechol 2-monooxygenase, reductase component (185 aa).

The protein belongs to the non-flavoprotein flavin reductase family. As to quaternary structure, the 4-NP/4-NCA monooxygenase is composed of an oxygenase component NpcA and a reductase component NpcB.

It catalyses the reaction 4-nitrophenol + NADH + O2 + H(+) = 4-nitrocatechol + NAD(+) + H2O. The enzyme catalyses 4-nitrocatechol + NADPH + O2 = 2-hydroxy-1,4-benzoquinone + nitrite + NADP(+) + H2O. The catalysed reaction is 4-nitrocatechol + NADH + O2 = 2-hydroxy-1,4-benzoquinone + nitrite + NAD(+) + H2O. The protein operates within aromatic compound metabolism. Its pathway is xenobiotic degradation. Its activity is regulated as follows. Inhibited by methimazole. Its function is as follows. Involved in the degradation of para-nitrophenol (4-NP). Catalyzes both the initial hydroxylation of 4-NP to produce 4-nitrocatechol (4-NCA) and the subsequent oxidative release of the nitro group from 4-NCA to produce 2-hydroxy-1,4-benzoquinone. It can also use 4-nitroresorcinol as substrate with a rate of nitrite release similar to that observed with the two physiological substrates, 4-PN and 4-NCA. The protein is 4-nitrophenol 4-monooxygenase/4-nitrocatechol 2-monooxygenase, reductase component (npcB) of Rhodococcus opacus (Nocardia opaca).